Consider the following 794-residue polypeptide: Putative neurotrophin receptor LTRK 1 (794 aa).

Positions 1 to 33 (MRGPRRFRLWTRANVLTVISILTSILSGAGCSP) are cleaved as a signal peptide. Residues 34 to 419 (LSQLPSDNPA…PTEDFGPQTQ (386 aa)) are Extracellular-facing. The disordered stretch occupies residues 36–102 (QLPSDNPAHV…DQVPGDASRN (67 aa)). Asparagine 64, asparagine 102, and asparagine 128 each carry an N-linked (GlcNAc...) asparagine glycan. LRR repeat units lie at residues 181–202 (CLKH…AFKT) and 205–226 (SLET…LLRT). In terms of domain architecture, LRRCT spans 237–280 (NALTCSCTNLWLRSVDVAADRSEMTCSTRDGVSKMKMTQFKCEP). 2 N-linked (GlcNAc...) asparagine glycosylation sites follow: asparagine 288 and asparagine 374. A helical transmembrane segment spans residues 420–440 (VILPVVGVVILLISAVFIIYL). At 441-794 (CQRAKHRSHA…GDPVYIDIIA (354 aa)) the chain is on the cytoplasmic side. In terms of domain architecture, Protein kinase spans 504 to 775 (ILLMRVIGEG…PQDRLTMKDI (272 aa)). Residues 510–518 (IGEGAFGRV) and lysine 538 contribute to the ATP site. Catalysis depends on aspartate 647, which acts as the Proton acceptor. Phosphotyrosine; by autocatalysis occurs at positions 673, 677, 678, and 789.

It belongs to the protein kinase superfamily. Tyr protein kinase family. Insulin receptor subfamily. Expression is confined to the central nervous system and its associated endocrine tissues.

The protein localises to the membrane. The enzyme catalyses L-tyrosyl-[protein] + ATP = O-phospho-L-tyrosyl-[protein] + ADP + H(+). In terms of biological role, may bind an endogenous invertebrate neurotrophin. Binds human NT-3, but not NGF or BDNF. This is Putative neurotrophin receptor LTRK 1 from Lymnaea stagnalis (Great pond snail).